The primary structure comprises 232 residues: Ovalbumin-related protein X (232 aa).

This sequence belongs to the serpin family. Ov-serpin subfamily. In terms of tissue distribution, expressed in egg white (at protein level).

This Gallus gallus (Chicken) protein is Ovalbumin-related protein X (SERPINB14C).